A 761-amino-acid chain; its full sequence is Complement factor B (761 aa).

The N-terminal stretch at Met1–Ala22 is a signal peptide. Sushi domains lie at Val32–Ala97, Ile98–Asp157, and Gly160–Asp217. Cystine bridges form between Cys34/Cys73, Cys59/Cys95, Cys100/Cys142, Cys128/Cys155, Cys162/Cys202, and Cys188/Cys215. Residues Asn119 and Asn139 are each glycosylated (N-linked (GlcNAc...) asparagine). A VWFA domain is found at Asn267–Ile466. 2 residues coordinate Mg(2+): Ser275 and Ser277. Residue Asn282 is glycosylated (N-linked (GlcNAc...) asparagine). Position 350 (Thr350) interacts with Mg(2+). An N-linked (GlcNAc...) asparagine glycan is attached at Asn375. A Peptidase S1 domain is found at Leu474 to Lys754. Disulfide bonds link Cys475–Cys593, Cys508–Cys524, Cys596–Cys612, Cys653–Cys679, and Cys692–Cys722. Catalysis depends on charge relay system residues His523 and Asp573. Ser696 acts as the Charge relay system in catalysis.

The protein belongs to the peptidase S1 family. As to quaternary structure, monomer. Interacts with complement C3b; this interaction is dependent on the presence of Mg(2+). Catalytic component of the C3 convertase of the alternative complement pathway, also named C3bBb, composed of complement factor B Bb and complement C3b. Catalytic component of the C5 convertase of the alternative complement pathway, also named C3bBb3b, composed of complement factor B Bb and additional molecules of complement C3b. Interacts to CFP; this interaction contributes to the stabilization of the active C3-convertase enzyme complex. Mg(2+) serves as cofactor. It depends on Mn(2+) as a cofactor. In terms of processing, cleaved by CFD following activation of the alternative complement system, generating Ba and Bb chains. Cleavage and activation takes place when CFB is already associated with complement C3b.

It localises to the secreted. It is found in the cell surface. The catalysed reaction is Cleavage of Arg-|-Ser bond in complement component C3 alpha-chain to yield C3a and C3b, and Arg-|-Xaa bond in complement component C5 alpha-chain to yield C5a and C5b.. In terms of biological role, precursor of the catalytic component of the C3 and C5 convertase complexes of the alternative pathway of the complement system, a cascade of proteins that leads to phagocytosis and breakdown of pathogens and signaling that strengthens the adaptive immune system. The alternative complement pathway acts as an amplification loop that enhances other complement pathways (classical, lectin and GZMK) by promoting formation of additional C3 and C5 convertases. CFB is cleaved and activated by CFD to generate Ba and Bb chains; Bb chain constituting the catalytic component of the C3 and C5 convertases. Its function is as follows. Serine protease component of the complement C3 and C5 convertase complexes of the alternative complement pathway. Following cleavage and activation by factor D (CFD), forms the C3 convertase together with complement C3b. As part of the C3 convertase, cleaves and activates C3 into C3a anaphylatoxin and C3b opsonin, the next components of the complement pathways. When an additional complement C3b molecule binds to the C3 convertase, forms the C5 convertase, which cleaves and activates C5 into C5a anaphylatoxin and C5b component of the membrane attack complex. Involved in proliferation and differentiation of preactivated B-lymphocytes, rapid spreading of peripheral blood monocytes, stimulation of lymphocyte blastogenesis and lysis of erythrocytes. The sequence is that of Complement factor B (Cfb) from Mus musculus (Mouse).